A 543-amino-acid polypeptide reads, in one-letter code: MMPTPVILLKEGTDSSQGIPQLVSNISACQVIAEAVRTTLGPRGMDKLIVDGRGKATISNDGATILKLLDVVHPAAKTLVDIAKSQDAEVGDGTTSVTLLAAEFLKQVKPYVEEGLHPQIIIRAFRTATQLAVNKIKEIAVTVKKADKVEQRKLLEKCAMTALSSKLISQQKAFFAKMVVDAVMMLDDLLQLKMIGIKKVQGGALEDSQLVAGVAFKKTFSYAGFEMQPKKYHNPKVALLNVELELKAEKDNAEIRVHTVEDYQAIVDAEWNILYDKLEKIHHSGAKVVLSKLPIGDVATQYFADRDMFCAGRVPEEDLKRTMMACGGSIQTSVNALSADVLGRCQVFEETQIGGERYNFFTGCPKAKTCTFILRGGAEQFMEETERSLHDAIMIVRRAIKNDSVVAGGGAIEMELSKYLRDYSRTIPGKQQLLIGAYAKALEIIPRQLCDNAGFDATNILNKLRARHAQGGTWYGVDINNEDIADNFEAFVWEPAMVRINALTAASEAACLIVSVDETIKNPRSTVDAPAAAGRGRGRGRPH.

N-acetylmethionine is present on M1. G41 is an ADP binding site. Residue G41 participates in ATP binding. At K67 the chain carries N6-acetyllysine. Residue D92 participates in Mg(2+) binding. Residues G93, T94, T95, S96, S164, and S165 each contribute to the ADP site. G93 is a binding site for ATP. S96 is an ATP binding site. K250 and K320 each carry N6-acetyllysine. Residues R398 and G409 each coordinate ATP. G409 serves as a coordination point for ADP. Residue K430 forms a Glycyl lysine isopeptide (Lys-Gly) (interchain with G-Cter in SUMO2) linkage. The ADP site is built by E494 and R499. An ATP-binding site is contributed by R499. Position 535 is an omega-N-methylarginine (R535).

This sequence belongs to the TCP-1 chaperonin family. As to quaternary structure, component of the chaperonin-containing T-complex (TRiC), a hexadecamer composed of two identical back-to-back stacked rings enclosing a protein folding chamber. Each ring is made up of eight different subunits: TCP1/CCT1, CCT2, CCT3, CCT4, CCT5, CCT6A/CCT6, CCT7, CCT8. Interacts with PACRG. Interacts with DLEC1.

It is found in the cytoplasm. It catalyses the reaction ATP + H2O = ADP + phosphate + H(+). Its function is as follows. Component of the chaperonin-containing T-complex (TRiC), a molecular chaperone complex that assists the folding of actin, tubulin and other proteins upon ATP hydrolysis. The TRiC complex mediates the folding of WRAP53/TCAB1, thereby regulating telomere maintenance. This Pongo abelii (Sumatran orangutan) protein is T-complex protein 1 subunit eta (CCT7).